Here is a 749-residue protein sequence, read N- to C-terminus: ATP-dependent zinc metalloprotease FtsH 3 (749 aa).

The segment covering 1-17 (MTGDPPERRSNGDRLPA) has biased composition (basic and acidic residues). Positions 1–67 (MTGDPPERRS…GRNGGGMRPF (67 aa)) are disordered. At 1–75 (MTGDPPERRS…PFRFPGGRWG (75 aa)) the chain is on the cytoplasmic side. The helical transmembrane segment at 76 to 96 (ILVFILVLLGLNWWISSNALA) threads the bilayer. At 97 to 186 (PSERVRVPYS…NASPADNGPS (90 aa)) the chain is on the extracellular side. A helical membrane pass occupies residues 187 to 207 (LLVSILLGFGPVILIIALFVF). Residues 208–749 (LSRRMAGAAG…LGGSVRAGDA (542 aa)) lie on the Cytoplasmic side of the membrane. 281 to 288 (GQPGTGKT) provides a ligand contact to ATP. Residue H504 participates in Zn(2+) binding. The active site involves E505. Zn(2+) is bound by residues H508 and D580. The segment covering 679 to 689 (GLEHMRPERVE) has biased composition (basic and acidic residues). The interval 679–749 (GLEHMRPERV…LGGSVRAGDA (71 aa)) is disordered.

This sequence in the central section; belongs to the AAA ATPase family. In the C-terminal section; belongs to the peptidase M41 family. Homohexamer. Zn(2+) is required as a cofactor.

It localises to the cell membrane. Functionally, acts as a processive, ATP-dependent zinc metallopeptidase for both cytoplasmic and membrane proteins. Plays a role in the quality control of integral membrane proteins. This is ATP-dependent zinc metalloprotease FtsH 3 from Conexibacter woesei (strain DSM 14684 / CCUG 47730 / CIP 108061 / JCM 11494 / NBRC 100937 / ID131577).